The primary structure comprises 338 residues: Glycerol-3-phosphate dehydrogenase [NAD(P)+] (338 aa).

NADPH is bound by residues Ser13, Trp14, and Lys108. Residues Lys108, Gly139, and Ser141 each contribute to the sn-glycerol 3-phosphate site. Ala143 serves as a coordination point for NADPH. Lys194, Asp247, Ser257, Arg258, and Asn259 together coordinate sn-glycerol 3-phosphate. Lys194 serves as the catalytic Proton acceptor. Arg258 is a binding site for NADPH. Positions 282 and 284 each coordinate NADPH.

It belongs to the NAD-dependent glycerol-3-phosphate dehydrogenase family.

Its subcellular location is the cytoplasm. It catalyses the reaction sn-glycerol 3-phosphate + NAD(+) = dihydroxyacetone phosphate + NADH + H(+). The enzyme catalyses sn-glycerol 3-phosphate + NADP(+) = dihydroxyacetone phosphate + NADPH + H(+). It participates in membrane lipid metabolism; glycerophospholipid metabolism. Functionally, catalyzes the reduction of the glycolytic intermediate dihydroxyacetone phosphate (DHAP) to sn-glycerol 3-phosphate (G3P), the key precursor for phospholipid synthesis. The polypeptide is Glycerol-3-phosphate dehydrogenase [NAD(P)+] (Streptococcus pneumoniae (strain JJA)).